The following is a 392-amino-acid chain: L-lactate dehydrogenase (392 aa).

The region spanning 1–380 (MIISASTDYR…GSDSLVTGSA (380 aa)) is the FMN hydroxy acid dehydrogenase domain. Tyr24 contacts substrate. FMN-binding residues include Ser106 and Gln127. A substrate-binding site is contributed by Tyr129. Thr155 contacts FMN. A substrate-binding site is contributed by Arg164. Lys251 lines the FMN pocket. His275 acts as the Proton acceptor in catalysis. Arg278 is a binding site for substrate. 306–330 (DSGVRNGLDVVRMIAMGADTILLGR) lines the FMN pocket.

The protein belongs to the FMN-dependent alpha-hydroxy acid dehydrogenase family. FMN is required as a cofactor.

It localises to the cell inner membrane. The catalysed reaction is (S)-lactate + A = pyruvate + AH2. In terms of biological role, catalyzes the conversion of L-lactate to pyruvate. Is coupled to the respiratory chain. This Chromohalobacter salexigens (strain ATCC BAA-138 / DSM 3043 / CIP 106854 / NCIMB 13768 / 1H11) protein is L-lactate dehydrogenase.